A 216-amino-acid polypeptide reads, in one-letter code: Uracil phosphoribosyltransferase (216 aa).

A GTP-binding site is contributed by 30–34; sequence KNLVR. 5-phospho-alpha-D-ribose 1-diphosphate-binding positions include R80, R105, and 140-148; that span reads DPMIATAST. Uracil is bound by residues I203 and 208 to 210; that span reads GDA. D209 contributes to the 5-phospho-alpha-D-ribose 1-diphosphate binding site.

This sequence belongs to the UPRTase family. It depends on Mg(2+) as a cofactor.

The catalysed reaction is UMP + diphosphate = 5-phospho-alpha-D-ribose 1-diphosphate + uracil. Its pathway is pyrimidine metabolism; UMP biosynthesis via salvage pathway; UMP from uracil: step 1/1. Its activity is regulated as follows. Allosterically activated by GTP. Functionally, catalyzes the conversion of uracil and 5-phospho-alpha-D-ribose 1-diphosphate (PRPP) to UMP and diphosphate. This chain is Uracil phosphoribosyltransferase, found in Saccharolobus islandicus (strain M.16.4 / Kamchatka #3) (Sulfolobus islandicus).